The following is an 88-amino-acid chain: Sec-independent protein translocase protein TatA (88 aa).

A helical membrane pass occupies residues 1–21 (MGGISITQLLIIASIVVVLFG). The disordered stretch occupies residues 39–88 (FKKSMSEDDNTTSTSSDKSSQDADFTAPPIEPKANLACPDEAKNKDKEHV). Residues 49–62 (TTSTSSDKSSQDAD) show a composition bias toward low complexity. Positions 78–88 (DEAKNKDKEHV) are enriched in basic and acidic residues.

This sequence belongs to the TatA/E family. In terms of assembly, the Tat system comprises two distinct complexes: a TatABC complex, containing multiple copies of TatA, TatB and TatC subunits, and a separate TatA complex, containing only TatA subunits. Substrates initially bind to the TatABC complex, which probably triggers association of the separate TatA complex to form the active translocon.

The protein resides in the cell inner membrane. Its function is as follows. Part of the twin-arginine translocation (Tat) system that transports large folded proteins containing a characteristic twin-arginine motif in their signal peptide across membranes. TatA could form the protein-conducting channel of the Tat system. The sequence is that of Sec-independent protein translocase protein TatA from Sodalis glossinidius (strain morsitans).